A 147-amino-acid chain; its full sequence is Myoglobin (147 aa).

One can recognise a Globin domain in the interval 2–137; it reads ADFEMVLKHW…VMTTIIADIE (136 aa). H60 serves as a coordination point for nitrite. H60 lines the O2 pocket. H89 contacts heme b.

This sequence belongs to the globin family. In terms of assembly, monomeric.

It is found in the cytoplasm. Its subcellular location is the sarcoplasm. It catalyses the reaction Fe(III)-heme b-[protein] + nitric oxide + H2O = Fe(II)-heme b-[protein] + nitrite + 2 H(+). The catalysed reaction is H2O2 + AH2 = A + 2 H2O. In terms of biological role, monomeric heme protein which primary function is to store oxygen and facilitate its diffusion within muscle tissues. Reversibly binds oxygen through a pentacoordinated heme iron and enables its timely and efficient release as needed during periods of heightened demand. Depending on the oxidative conditions of tissues and cells, and in addition to its ability to bind oxygen, it also has a nitrite reductase activity whereby it regulates the production of bioactive nitric oxide. Under stress conditions, like hypoxia and anoxia, it also protects cells against reactive oxygen species thanks to its pseudoperoxidase activity. The chain is Myoglobin (mb) from Makaira nigricans (Atlantic blue marlin).